A 402-amino-acid chain; its full sequence is Phosphoribulokinase, chloroplastic (402 aa).

A chloroplast-targeting transit peptide spans 1-51 (MAVCTVYTIPTTTHLGSSFNQNNKQVFFNYKRSSSSNNTLFTTRPSYVITC). Cys-67 and Cys-106 form a disulfide bridge.

The protein belongs to the phosphoribulokinase family.

The protein resides in the plastid. It is found in the chloroplast. The enzyme catalyses D-ribulose 5-phosphate + ATP = D-ribulose 1,5-bisphosphate + ADP + H(+). Its pathway is carbohydrate biosynthesis; Calvin cycle. With respect to regulation, light regulated via thioredoxin by reversible oxidation/reduction of sulfhydryl/disulfide groups. This Spinacia oleracea (Spinach) protein is Phosphoribulokinase, chloroplastic.